The following is a 165-amino-acid chain: Ubiquitin-conjugating enzyme E2 G2 (165 aa).

Alanine 2 bears the N-acetylalanine mark. The UBC core domain maps to 4-164 (TALKRLMAEY…AKQIVQKSLG (161 aa)). The active-site Glycyl thioester intermediate is the cysteine 89.

This sequence belongs to the ubiquitin-conjugating enzyme family. Interacts with AUP1 (via C-terminus); the interaction recruits UBE2G2 to lipid droplets. Interacts with ubiquitin ligases AMFR/gp78 and RNF139/TRC8; recruitment to lipid droplets by AUP1 facilitates interaction of UBE2G2 with AMFR and RNF139, leading to sterol-induced ubiquitination of 3-hydroxy-3-methylglutaryl coenzyme A reductase and its subsequent proteasomal degradation.

The protein resides in the endoplasmic reticulum. The protein localises to the lipid droplet. The catalysed reaction is S-ubiquitinyl-[E1 ubiquitin-activating enzyme]-L-cysteine + [E2 ubiquitin-conjugating enzyme]-L-cysteine = [E1 ubiquitin-activating enzyme]-L-cysteine + S-ubiquitinyl-[E2 ubiquitin-conjugating enzyme]-L-cysteine.. Its pathway is protein modification; protein ubiquitination. Accepts ubiquitin from the E1 complex and catalyzes its covalent attachment to other proteins. In vitro catalyzes 'Lys-48'-linked polyubiquitination. Involved in endoplasmic reticulum-associated degradation (ERAD). Required for sterol-induced ubiquitination of 3-hydroxy-3-methylglutaryl coenzyme A reductase and its subsequent proteasomal degradation. The sequence is that of Ubiquitin-conjugating enzyme E2 G2 from Bos taurus (Bovine).